The sequence spans 276 residues: uncharacterized protein (276 aa).

Residues 20-137 enclose the AB hydrolase-1 domain; it reads PVLIFIPGAN…PPINTFLPDS (118 aa). The interval 57-76 is disordered; sequence GESELTEPLPDSASNPDSDY.

Belongs to the AB hydrolase superfamily.

This is an uncharacterized protein from Staphylococcus aureus (strain MW2).